We begin with the raw amino-acid sequence, 110 residues long: Small ubiquitin-related modifier 3 (110 aa).

Glycyl lysine isopeptide (Lys-Gly) (interchain with G-Cter in SUMO2) cross-links involve residues Lys5 and Lys7. A Glycyl lysine isopeptide (Lys-Gly) (interchain with G-Cter in SUMO); alternate cross-link involves residue Lys11. A Glycyl lysine isopeptide (Lys-Gly) (interchain with G-Cter in SUMO2); alternate cross-link involves residue Lys11. The Ubiquitin-like domain occupies 15–92; the sequence is DHINLKVAGQ…IDVFQQQTGG (78 aa). Positions 89–101 are enriched in polar residues; the sequence is QTGGTASRASVPT. Residues 89–110 are disordered; sequence QTGGTASRASVPTPSHFPDICY. Gly92 participates in a covalent cross-link: Glycyl lysine isopeptide (Gly-Lys) (interchain with K-? in acceptor proteins). The propeptide occupies 93–110; that stretch reads TASRASVPTPSHFPDICY.

Belongs to the ubiquitin family. SUMO subfamily. As to quaternary structure, interacts with SAE2 and UBE2I. Covalently attached to a number of proteins. Interacts with USP25 (via ts SIM domain); the interaction sumoylates USP25 and inhibits its ubiquitin hydrolyzing activity. Interacts with BMAL1. Polymeric chains can be formed through Lys-11 cross-linking. Post-translationally, cleavage of precursor form by SENP1, SENP2 or SENP5 is necessary for function.

It localises to the cytoplasm. The protein localises to the nucleus. Its subcellular location is the PML body. In terms of biological role, ubiquitin-like protein which can be covalently attached to target lysines either as a monomer or as a lysine-linked polymer. Does not seem to be involved in protein degradation and may function as an antagonist of ubiquitin in the degradation process. Plays a role in a number of cellular processes such as nuclear transport, DNA replication and repair, mitosis and signal transduction. Covalent attachment to its substrates requires prior activation by the E1 complex SAE1-SAE2 and linkage to the E2 enzyme UBE2I, and can be promoted by an E3 ligase such as PIAS1-4, RANBP2 or CBX4. Plays a role in the regulation of sumoylation status of SETX. This chain is Small ubiquitin-related modifier 3 (Sumo3), found in Rattus norvegicus (Rat).